Here is a 143-residue protein sequence, read N- to C-terminus: Putative pre-16S rRNA nuclease (143 aa).

Belongs to the YqgF nuclease family.

Its subcellular location is the cytoplasm. Could be a nuclease involved in processing of the 5'-end of pre-16S rRNA. The protein is Putative pre-16S rRNA nuclease of Salinibacter ruber (strain DSM 13855 / M31).